Reading from the N-terminus, the 176-residue chain is ATP synthase subunit b (176 aa).

The helical transmembrane segment at 27–47 (FFVFSFLTLILVVTIVTLLVY) threads the bilayer.

It belongs to the ATPase B chain family. F-type ATPases have 2 components, F(1) - the catalytic core - and F(0) - the membrane proton channel. F(1) has five subunits: alpha(3), beta(3), gamma(1), delta(1), epsilon(1). F(0) has three main subunits: a(1), b(2) and c(10-14). The alpha and beta chains form an alternating ring which encloses part of the gamma chain. F(1) is attached to F(0) by a central stalk formed by the gamma and epsilon chains, while a peripheral stalk is formed by the delta and b chains.

It localises to the cell membrane. F(1)F(0) ATP synthase produces ATP from ADP in the presence of a proton or sodium gradient. F-type ATPases consist of two structural domains, F(1) containing the extramembraneous catalytic core and F(0) containing the membrane proton channel, linked together by a central stalk and a peripheral stalk. During catalysis, ATP synthesis in the catalytic domain of F(1) is coupled via a rotary mechanism of the central stalk subunits to proton translocation. In terms of biological role, component of the F(0) channel, it forms part of the peripheral stalk, linking F(1) to F(0). In Metamycoplasma arthritidis (strain 158L3-1) (Mycoplasma arthritidis), this protein is ATP synthase subunit b.